We begin with the raw amino-acid sequence, 500 residues long: Probable cytosol aminopeptidase (500 aa).

Mn(2+) contacts are provided by Lys268 and Asp273. Residue Lys280 is part of the active site. The Mn(2+) site is built by Asp291, Asp350, and Glu352. Arg354 is a catalytic residue.

Belongs to the peptidase M17 family. Mn(2+) is required as a cofactor.

The protein localises to the cytoplasm. It carries out the reaction Release of an N-terminal amino acid, Xaa-|-Yaa-, in which Xaa is preferably Leu, but may be other amino acids including Pro although not Arg or Lys, and Yaa may be Pro. Amino acid amides and methyl esters are also readily hydrolyzed, but rates on arylamides are exceedingly low.. It catalyses the reaction Release of an N-terminal amino acid, preferentially leucine, but not glutamic or aspartic acids.. In terms of biological role, presumably involved in the processing and regular turnover of intracellular proteins. Catalyzes the removal of unsubstituted N-terminal amino acids from various peptides. The chain is Probable cytosol aminopeptidase from Azoarcus sp. (strain BH72).